The chain runs to 35 residues: MDQNEANIYNENNENNENNENENCQNEPIRIKIII.

Low complexity predominate over residues 1–27; that stretch reads MDQNEANIYNENNENNENNENENCQNE. Residues 1–35 are disordered; the sequence is MDQNEANIYNENNENNENNENENCQNEPIRIKIII.

This is an uncharacterized protein from Dictyostelium discoideum (Social amoeba).